A 243-amino-acid polypeptide reads, in one-letter code: Small ribosomal subunit protein uS3 (243 aa).

A KH type-2 domain is found at 22 to 93; it reads LNEFLTRELA…SVELYAEKVA (72 aa). Positions 195–243 are disordered; that stretch reads QQGKNGPKKPQPDHILVTEPKDEPAPLEPTSDIRSLAPAPLPQPVAAVA.

The protein belongs to the universal ribosomal protein uS3 family.

In Manduca sexta (Tobacco hawkmoth), this protein is Small ribosomal subunit protein uS3 (RpS3).